We begin with the raw amino-acid sequence, 153 residues long: Bacteriohemerythrin (153 aa).

The Fe cation site is built by His-21, His-57, Glu-61, His-76, His-80, His-115, and Asp-120.

Belongs to the hemerythrin family. Monomer.

Functionally, oxygen-binding protein. May be involved in a storage mechanism or for delivery to oxygen-requiring enzymes. The oxygen-binding site contains two iron atoms. The polypeptide is Bacteriohemerythrin (Pseudomonas aeruginosa (strain UCBPP-PA14)).